The chain runs to 459 residues: Cysteine--tRNA ligase (459 aa).

Cysteine 28 contacts Zn(2+). Positions 30-40 (ITIYDLCHIGH) match the 'HIGH' region motif. Residues cysteine 209, histidine 234, and glutamate 238 each contribute to the Zn(2+) site. Positions 266–270 (KMSKS) match the 'KMSKS' region motif. Residue lysine 269 coordinates ATP.

This sequence belongs to the class-I aminoacyl-tRNA synthetase family. In terms of assembly, monomer. Requires Zn(2+) as cofactor.

It is found in the cytoplasm. The catalysed reaction is tRNA(Cys) + L-cysteine + ATP = L-cysteinyl-tRNA(Cys) + AMP + diphosphate. This Shewanella sediminis (strain HAW-EB3) protein is Cysteine--tRNA ligase.